Here is a 335-residue protein sequence, read N- to C-terminus: Transmembrane protein 120B (335 aa).

Positions 1 to 39 (MSLQKCQEEWGELEKEFQQLQETHKVYKQKLEELNGLQN) form a coiled coil. Transmembrane regions (helical) follow at residues 100–122 (GLYL…AKFA), 130–150 (FKLY…FVLH), 157–177 (VFNF…SILI), 193–213 (VSTF…YQIF), 268–288 (FLLP…ITLF), and 300–320 (QVFV…LTTL).

Belongs to the TMEM120 family.

It localises to the nucleus inner membrane. Necessary for efficient adipogenesis. Does not show ion channel activity. The chain is Transmembrane protein 120B (tmem120b) from Xenopus tropicalis (Western clawed frog).